Reading from the N-terminus, the 280-residue chain is S-methyl-5'-thioadenosine phosphorylase (280 aa).

Phosphate-binding positions include S18, 60–61 (RH), and 93–94 (TA). M196 serves as a coordination point for substrate. T197 contributes to the phosphate binding site. 220–222 (DYD) serves as a coordination point for substrate.

Belongs to the PNP/MTAP phosphorylase family. MTAP subfamily. As to quaternary structure, homotrimer.

The protein localises to the cytoplasm. The protein resides in the nucleus. The enzyme catalyses S-methyl-5'-thioadenosine + phosphate = 5-(methylsulfanyl)-alpha-D-ribose 1-phosphate + adenine. Its pathway is amino-acid biosynthesis; L-methionine biosynthesis via salvage pathway; S-methyl-5-thio-alpha-D-ribose 1-phosphate from S-methyl-5'-thioadenosine (phosphorylase route): step 1/1. Its function is as follows. Catalyzes the reversible phosphorylation of S-methyl-5'-thioadenosine (MTA) to adenine and 5-methylthioribose-1-phosphate. Involved in the breakdown of MTA, a major by-product of polyamine biosynthesis. Responsible for the first step in the methionine salvage pathway after MTA has been generated from S-adenosylmethionine. Has broad substrate specificity with 6-aminopurine nucleosides as preferred substrates. The sequence is that of S-methyl-5'-thioadenosine phosphorylase from Ciona intestinalis (Transparent sea squirt).